A 272-amino-acid chain; its full sequence is Tryptophan synthase alpha chain (272 aa).

Residues Glu-53 and Asp-64 each act as proton acceptor in the active site.

The protein belongs to the TrpA family. As to quaternary structure, tetramer of two alpha and two beta chains.

The catalysed reaction is (1S,2R)-1-C-(indol-3-yl)glycerol 3-phosphate + L-serine = D-glyceraldehyde 3-phosphate + L-tryptophan + H2O. Its pathway is amino-acid biosynthesis; L-tryptophan biosynthesis; L-tryptophan from chorismate: step 5/5. The alpha subunit is responsible for the aldol cleavage of indoleglycerol phosphate to indole and glyceraldehyde 3-phosphate. The protein is Tryptophan synthase alpha chain of Xanthomonas campestris pv. campestris (strain 8004).